The following is a 465-amino-acid chain: Plasma alpha-L-fucosidase (465 aa).

The first 26 residues, 1 to 26 (MRPQELPRLAFPLLLLLLLPPPPCPA), serve as a signal peptide directing secretion. N169 and N237 each carry an N-linked (GlcNAc...) asparagine glycan. A Phosphoserine modification is found at S299. N-linked (GlcNAc...) asparagine glycosylation occurs at N375.

The protein belongs to the glycosyl hydrolase 29 family. Homotetramer.

Its subcellular location is the secreted. The catalysed reaction is an alpha-L-fucoside + H2O = L-fucose + an alcohol. In terms of biological role, alpha-L-fucosidase is responsible for hydrolyzing the alpha-1,6-linked fucose joined to the reducing-end N-acetylglucosamine of the carbohydrate moieties of glycoproteins. This chain is Plasma alpha-L-fucosidase (FUCA2), found in Pongo abelii (Sumatran orangutan).